An 817-amino-acid chain; its full sequence is Transcription factor SPT20 homolog-like 2 (817 aa).

Residues M1–N14 are compositionally biased toward basic and acidic residues. 5 disordered regions span residues M1–Y28, P249–V275, P369–R553, P598–A630, and Q675–S697. A compositionally biased stretch (polar residues) spans S423–T440. Composition is skewed to low complexity over residues S469–S479, P494–P505, A513–P531, and P598–G618.

Belongs to the SPT20 family.

The polypeptide is Transcription factor SPT20 homolog-like 2 (SUPT20HL2) (Homo sapiens (Human)).